The primary structure comprises 420 residues: Diaminobutyrate--2-oxoglutarate transaminase (420 aa).

Position 271 is an N6-(pyridoxal phosphate)lysine (Lys271).

This sequence belongs to the class-III pyridoxal-phosphate-dependent aminotransferase family. Pyridoxal 5'-phosphate is required as a cofactor.

It catalyses the reaction L-2,4-diaminobutanoate + 2-oxoglutarate = L-aspartate 4-semialdehyde + L-glutamate. The protein operates within amine and polyamine biosynthesis; ectoine biosynthesis; L-ectoine from L-aspartate 4-semialdehyde: step 1/3. In terms of biological role, catalyzes reversively the conversion of L-aspartate beta-semialdehyde (ASA) to L-2,4-diaminobutyrate (DABA) by transamination with L-glutamate. In Streptomyces anulatus (Streptomyces chrysomallus), this protein is Diaminobutyrate--2-oxoglutarate transaminase (ectB).